Reading from the N-terminus, the 640-residue chain is (Z)-beta-ocimene synthase TPS13PK, chloroplastic (640 aa).

Residues 1 to 95 constitute a chloroplast transit peptide; it reads MAALVSTVSS…PFKDEAYVKR (95 aa). The tract at residues 50–69 is disordered; that stretch reads MSTNNNNNNNQKNSSRRSAN. Residues 60-69 are compositionally biased toward polar residues; that stretch reads QKNSSRRSAN. Positions 334, 371, 375, 515, and 518 each coordinate (2E)-geranyl diphosphate. Mg(2+) is bound by residues Asp371 and Asp375. A DDXXD motif motif is present at residues 371-375; the sequence is DDIYD. Residues Asp518, Thr522, and Glu526 each contribute to the Mg(2+) site.

It belongs to the terpene synthase family. In terms of assembly, monomer. Requires Mg(2+) as cofactor.

The protein localises to the plastid. The protein resides in the chloroplast. The enzyme catalyses (2E)-geranyl diphosphate = (Z)-beta-ocimene + diphosphate. The protein operates within secondary metabolite biosynthesis; terpenoid biosynthesis. Its function is as follows. Involved in monoterpene (C10) olefins biosynthesis, constituants of cannabinoids and terpenoids-rich resins. Catalyzes mainly the conversion of (2E)-geranyl diphosphate to (Z)-beta-ocimene. The polypeptide is (Z)-beta-ocimene synthase TPS13PK, chloroplastic (Cannabis sativa (Hemp)).